The primary structure comprises 75 residues: Guanine nucleotide-binding protein G(I)/G(S)/G(O) subunit gamma-4 (75 aa).

Cys72 is subject to Cysteine methyl ester. Cys72 carries the S-geranylgeranyl cysteine lipid modification. Residues 73–75 (TIL) constitute a propeptide, removed in mature form.

Belongs to the G protein gamma family. G proteins are composed of 3 units, alpha, beta and gamma. Interacts with beta-1 and beta-2, but not with beta-3. Interacts with KCNK1. Interacts (via C-terminus) with KCNK2/TREK-1 (via N-terminus); this interaction confers ion selectivity to Cl(-) and L-glutamate. In terms of tissue distribution, brain, kidney, pancreas, skeletal muscle and faintly in cardiac muscle.

It localises to the cell membrane. Functionally, guanine nucleotide-binding proteins (G proteins) are involved as a modulator or transducer in various transmembrane signaling systems. The beta and gamma chains are required for the GTPase activity, for replacement of GDP by GTP, and for G protein-effector interaction. The protein is Guanine nucleotide-binding protein G(I)/G(S)/G(O) subunit gamma-4 (GNG4) of Homo sapiens (Human).